Reading from the N-terminus, the 734-residue chain is Casein kinase II subunit alpha'-interacting protein (734 aa).

The tract at residues 608–654 is disordered; sequence SLLPSTSSSTSSSSTTSSSSSVASASSDSSSSSSSSSSFSISSSSSP. Over residues 612 to 654 the composition is skewed to low complexity; sequence STSSSTSSSSTTSSSSSVASASSDSSSSSSSSSSFSISSSSSP.

As to quaternary structure, interacts (via C-terminus) with CSNK2A2. Post-translationally, phosphorylated by CK2 (casein kinase II), specifically by complexes containing catalytic subunit CSNK2A2.

It localises to the nucleus. Its function is as follows. May play a role in chromatin regulation of male germ cells. The polypeptide is Casein kinase II subunit alpha'-interacting protein (Homo sapiens (Human)).